The sequence spans 843 residues: DNA gyrase subunit A (843 aa).

The Topo IIA-type catalytic domain maps to 61–528 (LPDVRDGLKP…ESSTFNAEDL (468 aa)). Tyr-149 acts as the O-(5'-phospho-DNA)-tyrosine intermediate in catalysis. A GyrA-box motif is present at residues 555-561 (QKRGGKG).

It belongs to the type II topoisomerase GyrA/ParC subunit family. In terms of assembly, heterotetramer, composed of two GyrA and two GyrB chains. In the heterotetramer, GyrA contains the active site tyrosine that forms a transient covalent intermediate with DNA, while GyrB binds cofactors and catalyzes ATP hydrolysis.

It is found in the cytoplasm. The enzyme catalyses ATP-dependent breakage, passage and rejoining of double-stranded DNA.. Functionally, a type II topoisomerase that negatively supercoils closed circular double-stranded (ds) DNA in an ATP-dependent manner to modulate DNA topology and maintain chromosomes in an underwound state. Negative supercoiling favors strand separation, and DNA replication, transcription, recombination and repair, all of which involve strand separation. Also able to catalyze the interconversion of other topological isomers of dsDNA rings, including catenanes and knotted rings. Type II topoisomerases break and join 2 DNA strands simultaneously in an ATP-dependent manner. The sequence is that of DNA gyrase subunit A from Leptospira biflexa serovar Patoc (strain Patoc 1 / Ames).